The primary structure comprises 408 residues: Guanine nucleotide-binding protein alpha-14 subunit (408 aa).

GTP is bound by residues 39–46 (HSEELEAK), 79–86 (GGPLSGKS), 201–205 (TRIAD), 216–222 (VHSRKAT), 241–245 (DVGGQ), 285–288 (FPKF), 325–328 (NKVD), and Ala380. The G-alpha domain maps to 71-408 (SHIKILILGG…KANAKATGLS (338 aa)). Positions 74-87 (KILILGGPLSGKST) are G1 motif. A Mg(2+)-binding site is contributed by Ser86. Residues 214–222 (DIVHSRKAT) form a G2 motif region. Thr222 contributes to the Mg(2+) binding site. Positions 237–246 (LLMIDVGGQR) are G3 motif. Positions 321 to 328 (LLFFNKVD) are G4 motif. The segment at 378-383 (TTATNT) is G5 motif.

This sequence belongs to the G-alpha family. G proteins are composed of 3 units; alpha, beta and gamma. The alpha chain contains the guanine nucleotide binding site. Interacts with the dopamine receptor dop-2 (via C-terminus); the interaction is direct.

Guanine nucleotide-binding proteins (G proteins) are involved as modulators or transducers in various transmembrane signaling systems. In association with the G-protein coupled dopamine receptor dop-2, modulates two types of learning: touch habituation and chemosensory associative conditioning. The sequence is that of Guanine nucleotide-binding protein alpha-14 subunit from Caenorhabditis elegans.